Here is a 610-residue protein sequence, read N- to C-terminus: Phosphoenolpyruvate carboxykinase [GTP] (610 aa).

Substrate-binding positions include Arg-82 and 221 to 223 (YGG). Mn(2+)-binding residues include Lys-230 and His-250. Ser-272 provides a ligand contact to substrate. Residue 273–278 (ACGKTN) participates in GTP binding. Cys-274 is a catalytic residue. Mn(2+) is bound at residue Asp-297. 387 to 389 (NSR) contacts substrate. Residues Arg-389, Arg-420, and 515–518 (FGDN) contribute to the GTP site.

It belongs to the phosphoenolpyruvate carboxykinase [GTP] family. Monomer. It depends on Mn(2+) as a cofactor.

Its subcellular location is the cytoplasm. It catalyses the reaction oxaloacetate + GTP = phosphoenolpyruvate + GDP + CO2. It functions in the pathway carbohydrate biosynthesis; gluconeogenesis. Functionally, catalyzes the conversion of oxaloacetate (OAA) to phosphoenolpyruvate (PEP), the rate-limiting step in the metabolic pathway that produces glucose from lactate and other precursors derived from the citric acid cycle. This is Phosphoenolpyruvate carboxykinase [GTP] from Corynebacterium glutamicum (strain R).